The following is a 66-amino-acid chain: DNA-directed RNA polymerase subunit Rpo10 (66 aa).

The Zn(2+) site is built by Cys-7, Cys-10, Cys-44, and Cys-45.

It belongs to the archaeal Rpo10/eukaryotic RPB10 RNA polymerase subunit family. As to quaternary structure, part of the RNA polymerase complex. It depends on Zn(2+) as a cofactor.

The protein resides in the cytoplasm. The catalysed reaction is RNA(n) + a ribonucleoside 5'-triphosphate = RNA(n+1) + diphosphate. DNA-dependent RNA polymerase (RNAP) catalyzes the transcription of DNA into RNA using the four ribonucleoside triphosphates as substrates. In Saccharolobus islandicus (strain Y.N.15.51 / Yellowstone #2) (Sulfolobus islandicus), this protein is DNA-directed RNA polymerase subunit Rpo10.